The following is a 334-amino-acid chain: Methionine adenosyltransferase 2 subunit beta (334 aa).

Residues 37–40 (TGLL), 60–62 (YSR), 71–72 (NL), cysteine 93, arginine 97, tyrosine 159, and leucine 185 each bind NADP(+). Positions 319-334 (LWPFLVDKRWRQTVFH) are required for interaction with MAT2A.

It belongs to the dTDP-4-dehydrorhamnose reductase family. MAT2B subfamily. In terms of assembly, heterotrimer; composed of a catalytic mat2a homodimer that binds one regulatory mat2b chain. Heterohexamer; composed of a central, catalytic mat2a homotetramer flanked on either side by a regulatory mat2b chain. NADP binding increases the affinity for mat2a.

The protein operates within amino-acid biosynthesis; S-adenosyl-L-methionine biosynthesis; S-adenosyl-L-methionine from L-methionine: step 1/1. Regulatory subunit of S-adenosylmethionine synthetase 2, an enzyme that catalyzes the formation of S-adenosylmethionine from methionine and ATP. Regulates MAT2A catalytic activity by changing its kinetic properties, increasing its affinity for L-methionine. Can bind NADP (in vitro). In Xenopus tropicalis (Western clawed frog), this protein is Methionine adenosyltransferase 2 subunit beta (mat2b).